A 266-amino-acid polypeptide reads, in one-letter code: Oxygen-evolving enhancer protein 2-3, chloroplastic (266 aa).

A chloroplast-targeting transit peptide spans 1–80; sequence MASTQCFLHH…VGSKVSPADA (80 aa).

The protein belongs to the PsbP family.

Its subcellular location is the plastid. The protein resides in the chloroplast thylakoid membrane. May be involved in the regulation of photosystem II. This chain is Oxygen-evolving enhancer protein 2-3, chloroplastic (PSBP3), found in Nicotiana tabacum (Common tobacco).